The chain runs to 227 residues: MAYPFQLGLQDATSPIMEELLHFHDHTLMIVFLISSLVLYIISLMLTTKLTHTSTMDAQEVETVWTILPAIILILIALPSLRILYMMDEINNPSLTVKTMGHQWYWSYEYTDYEDLNFDSYMIPTQELKPGELRLLEVDNRVVLPMEMTVRMLISSEDVLHSWAVPSLGLKTDAIPGRLNQTTLMAMRPGLYYGQCSEICGSNHSFMPIVLEMVPLSYFETWSAVMV.

The Mitochondrial intermembrane segment spans residues 1–14 (MAYPFQLGLQDATS). The chain crosses the membrane as a helical span at residues 15–45 (PIMEELLHFHDHTLMIVFLISSLVLYIISLM). Residues 46–59 (LTTKLTHTSTMDAQ) lie on the Mitochondrial matrix side of the membrane. A helical transmembrane segment spans residues 60–87 (EVETVWTILPAIILILIALPSLRILYMM). Over 88–227 (DEINNPSLTV…YFETWSAVMV (140 aa)) the chain is Mitochondrial intermembrane. Cu cation is bound by residues His161, Cys196, Glu198, Cys200, His204, and Met207. Position 198 (Glu198) interacts with Mg(2+). At Tyr218 the chain carries Phosphotyrosine.

This sequence belongs to the cytochrome c oxidase subunit 2 family. In terms of assembly, component of the cytochrome c oxidase (complex IV, CIV), a multisubunit enzyme composed of 14 subunits. The complex is composed of a catalytic core of 3 subunits MT-CO1, MT-CO2 and MT-CO3, encoded in the mitochondrial DNA, and 11 supernumerary subunits COX4I, COX5A, COX5B, COX6A, COX6B, COX6C, COX7A, COX7B, COX7C, COX8 and NDUFA4, which are encoded in the nuclear genome. The complex exists as a monomer or a dimer and forms supercomplexes (SCs) in the inner mitochondrial membrane with NADH-ubiquinone oxidoreductase (complex I, CI) and ubiquinol-cytochrome c oxidoreductase (cytochrome b-c1 complex, complex III, CIII), resulting in different assemblies (supercomplex SCI(1)III(2)IV(1) and megacomplex MCI(2)III(2)IV(2)). Found in a complex with TMEM177, COA6, COX18, COX20, SCO1 and SCO2. Interacts with TMEM177 in a COX20-dependent manner. Interacts with COX20. Interacts with COX16. The cofactor is Cu cation.

The protein localises to the mitochondrion inner membrane. The catalysed reaction is 4 Fe(II)-[cytochrome c] + O2 + 8 H(+)(in) = 4 Fe(III)-[cytochrome c] + 2 H2O + 4 H(+)(out). In terms of biological role, component of the cytochrome c oxidase, the last enzyme in the mitochondrial electron transport chain which drives oxidative phosphorylation. The respiratory chain contains 3 multisubunit complexes succinate dehydrogenase (complex II, CII), ubiquinol-cytochrome c oxidoreductase (cytochrome b-c1 complex, complex III, CIII) and cytochrome c oxidase (complex IV, CIV), that cooperate to transfer electrons derived from NADH and succinate to molecular oxygen, creating an electrochemical gradient over the inner membrane that drives transmembrane transport and the ATP synthase. Cytochrome c oxidase is the component of the respiratory chain that catalyzes the reduction of oxygen to water. Electrons originating from reduced cytochrome c in the intermembrane space (IMS) are transferred via the dinuclear copper A center (CU(A)) of subunit 2 and heme A of subunit 1 to the active site in subunit 1, a binuclear center (BNC) formed by heme A3 and copper B (CU(B)). The BNC reduces molecular oxygen to 2 water molecules using 4 electrons from cytochrome c in the IMS and 4 protons from the mitochondrial matrix. The sequence is that of Cytochrome c oxidase subunit 2 (MT-CO2) from Lycalopex vetulus (Hoary fox).